A 209-amino-acid polypeptide reads, in one-letter code: Protein GrpE (209 aa).

The segment covering 1 to 18 (MKIFNKDGNKNSKEDTKA) has biased composition (basic and acidic residues). Residues 1–60 (MKIFNKDGNKNSKEDTKAGAENSEAQNSGSSAEEVNKARENPEEASASSEAEKSPEVKCQ) are disordered. The span at 23-33 (SEAQNSGSSAE) shows a compositional bias: polar residues. Residues 50-60 (EAEKSPEVKCQ) show a composition bias toward basic and acidic residues.

The protein belongs to the GrpE family. As to quaternary structure, homodimer.

It is found in the cytoplasm. Functionally, participates actively in the response to hyperosmotic and heat shock by preventing the aggregation of stress-denatured proteins, in association with DnaK and GrpE. It is the nucleotide exchange factor for DnaK and may function as a thermosensor. Unfolded proteins bind initially to DnaJ; upon interaction with the DnaJ-bound protein, DnaK hydrolyzes its bound ATP, resulting in the formation of a stable complex. GrpE releases ADP from DnaK; ATP binding to DnaK triggers the release of the substrate protein, thus completing the reaction cycle. Several rounds of ATP-dependent interactions between DnaJ, DnaK and GrpE are required for fully efficient folding. The polypeptide is Protein GrpE (Methanosarcina barkeri (strain Fusaro / DSM 804)).